The following is an 819-amino-acid chain: Molybdenum cofactor sulfurase (819 aa).

Lys-271 carries the N6-(pyridoxal phosphate)lysine modification. Cys-430 is a catalytic residue. Positions 650 to 817 (CKLLRYSSST…IGVGEEVNPD (168 aa)) constitute an MOSC domain.

It belongs to the class-V pyridoxal-phosphate-dependent aminotransferase family. MOCOS subfamily. Pyridoxal 5'-phosphate serves as cofactor. As to expression, ubiquitously expressed.

It carries out the reaction Mo-molybdopterin + L-cysteine + AH2 = thio-Mo-molybdopterin + L-alanine + A + H2O. It functions in the pathway cofactor biosynthesis; molybdopterin biosynthesis. Sulfurates the molybdenum cofactor. Sulfation of molybdenum is essential for xanthine dehydrogenase (XDH) and aldehyde oxidase (ADO) enzymes in which molybdenum cofactor is liganded by 1 oxygen and 1 sulfur atom in active form. Modulates cold stress- and osmotic stress-responsive gene expression by acting as key regulator of abscisic acid (ABA) biosynthesis. This is Molybdenum cofactor sulfurase (ABA3) from Arabidopsis thaliana (Mouse-ear cress).